Here is a 227-residue protein sequence, read N- to C-terminus: Endo-1,4-beta-xylanase 1 (227 aa).

A signal peptide spans 1-19; that stretch reads MVSLKSVLAAATAVSSAIA. The GH11 domain occupies 37–225; that stretch reads QVTPNAEGWH…SSGESDIYVQ (189 aa). Catalysis depends on Glu121, which acts as the Nucleophile. The active-site Proton donor is the Glu212.

It belongs to the glycosyl hydrolase 11 (cellulase G) family.

It catalyses the reaction Endohydrolysis of (1-&gt;4)-beta-D-xylosidic linkages in xylans.. Its pathway is glycan degradation; xylan degradation. The chain is Endo-1,4-beta-xylanase 1 from Humicola insolens (Soft-rot fungus).